The following is a 180-amino-acid chain: Large ribosomal subunit protein uL5 (180 aa).

Belongs to the universal ribosomal protein uL5 family. As to quaternary structure, part of the 50S ribosomal subunit; part of the 5S rRNA/L5/L18/L25 subcomplex. Contacts the 5S rRNA and the P site tRNA. Forms a bridge to the 30S subunit in the 70S ribosome.

In terms of biological role, this is one of the proteins that bind and probably mediate the attachment of the 5S RNA into the large ribosomal subunit, where it forms part of the central protuberance. In the 70S ribosome it contacts protein S13 of the 30S subunit (bridge B1b), connecting the 2 subunits; this bridge is implicated in subunit movement. Contacts the P site tRNA; the 5S rRNA and some of its associated proteins might help stabilize positioning of ribosome-bound tRNAs. The polypeptide is Large ribosomal subunit protein uL5 (Stenotrophomonas maltophilia (strain R551-3)).